A 767-amino-acid polypeptide reads, in one-letter code: MGSACEAGTDEPSRDDVKGTGNGILENGHSHKPEEEEWRNGMGEDLPNGHSTPPEPQQTDEQKEHQVQIVRWERFLPVKTLRVLLVENDDSTRQVVSALLRKCCYEVIPAENGLHAWQCLEDLQNHIDLVLTEVVMPRLSGIGLLSKITSHKICKDIPVIMMSSNDSMGTVFKCLSKGAVDFLVKPIRKNELKNLWQHVWRRCHSSSGSGSESGIRTQKCTKPKVDDEYENNSGSNNDNEDDDDNDEDDDDLSVGHNARDGSDNGSGTQSSWTKRAVEIDSPQQMSPDQPSDLPDSTCAQVIHPTSEICSNRWLPTANKRSGKKHKENNDDSMGKYLEIGAPRNSSMEYQSSPREMSVNPTEKQHETLMPQSKTTRETDSRNTQNEPTTQTVDLISSIARSTDDKQVVRINNAPDCSSKVPDGNDKNRDSLIDMTSEELGLKRLKTTGSATEIHDERNILKRSDLSAFTRYHTTVASNQGGAGFGGSCSPQDNSSEALKTDSNCKVKSNSDAAEIKQGSNGSSNNNDMGSSTKNAITKPSSNRGKVISPSAVKATQHTSAFHPVQRQTSPANVVGKDKVDEGIANGVNVGHPVDVQNSFMQHHHHVHYYVHVMTQQQQQPSIERGSSDAQCGSSNVFDPPIEGHAANYSVNGSFSGGHNGNNGQRGPSTAPNVGRPNMETVNGIVDENGAGGGNGSGSGSGNDLYQNGVCYREAALNKFRQKRKVRNFGKKVRYQSRKRLAEQRPRIRGQFVRQSGQEDQAGQDEDR.

Positions 1–64 (MGSACEAGTD…EPQQTDEQKE (64 aa)) are disordered. Positions 82 to 200 (RVLLVENDDS…ELKNLWQHVW (119 aa)) constitute a Response regulatory domain. Residues 205 to 214 (SSSGSGSESG) are compositionally biased toward low complexity. 5 disordered regions span residues 205–272 (SSSG…QSSW), 312–388 (RWLP…NEPT), 476–546 (ASNQ…RGKV), 646–701 (ANYS…SGSG), and 727–767 (NFGK…DEDR). Acidic residues predominate over residues 238–252 (DNEDDDDNDEDDDDL). Composition is skewed to polar residues over residues 263–272 (DNGSGTQSSW), 343–361 (RNSS…VNPT), and 488–497 (CSPQDNSSEA). Low complexity predominate over residues 518 to 531 (GSNGSSNNNDMGSS). The span at 532–543 (TKNAITKPSSNR) shows a compositional bias: polar residues. Residues 689-700 (GAGGGNGSGSGS) show a composition bias toward gly residues. The CCT domain maps to 712–754 (REAALNKFRQKRKVRNFGKKVRYQSRKRLAEQRPRIRGQFVRQ). Over residues 727–738 (NFGKKVRYQSRK) the composition is skewed to basic residues.

This sequence belongs to the ARR-like family.

It localises to the nucleus. Controls photoperiodic flowering response. Seems to be one of the component of the circadian clock. Expression of several members of the ARR-like family is controlled by circadian rhythm. The particular coordinated sequential expression of PRR73, PRR37, PRR95, PRR59 and PPR1 result to circadian waves that may be at the basis of the endogenous circadian clock. The polypeptide is Two-component response regulator-like PRR73 (PRR73) (Oryza sativa subsp. japonica (Rice)).